A 307-amino-acid polypeptide reads, in one-letter code: Hepatitis A virus cellular receptor 1 homolog (307 aa).

Residues 1–21 form the signal peptide; it reads MVQLQVFISGLLLLLPGSVDS. Residues 22–124 enclose the Ig-like V-type domain; that stretch reads YEVVKGVVGH…WFNDQKMTFS (103 aa). Residues 22–235 lie on the Extracellular side of the membrane; that stretch reads YEVVKGVVGH…RKPQRNPTKG (214 aa). Disulfide bonds link cysteine 37–cysteine 108, cysteine 49–cysteine 60, and cysteine 55–cysteine 107. The disordered stretch occupies residues 129-177; the sequence is PEIPTSPPTRPTTTRPTTTRPTTISTRSTHVPTSTRVSTSTPTPEQTQT. Residues 139 to 175 are compositionally biased toward low complexity; sequence PTTTRPTTTRPTTISTRSTHVPTSTRVSTSTPTPEQT. The N-linked (GlcNAc...) asparagine glycan is linked to asparagine 206. The chain crosses the membrane as a helical span at residues 236-256; that stretch reads FYVGMSVAALLLLLLASTVVV. Over 257 to 307 the chain is Cytoplasmic; sequence TRYIIIRKKMGSLSFVAFHVSKSRALQNAAIVHPRAEDNIYIIEDRSRGAE.

This sequence belongs to the immunoglobulin superfamily. TIM family. Interacts with STAM. Interacts with SELPLG. In terms of tissue distribution, expressed at a low level in normal kidney but are increased dramatically in postischemic kidney. Expressed in proliferating bromodeoxyuridine-positive and dedifferentiated vimentin-positive epithelial cells in regenerating proximal tubules.

Its subcellular location is the cell membrane. In terms of biological role, phosphatidylserine receptor that plays an important functional role in regulatory B-cells homeostasis including generation, expansion and suppressor functions. As P-selectin/SELPLG ligand, plays a specialized role in activated but not naive T-cell trafficking during inflammatory responses. Controls thereby T-cell accumulation in the inflamed central nervous system (CNS) and the induction of autoimmune disease. Also regulates expression of various anti-inflammatory cytokines and co-inhibitory ligands including IL10. Acts as a regulator of T-cell proliferation. May play a role in kidney injury and repair. This Rattus norvegicus (Rat) protein is Hepatitis A virus cellular receptor 1 homolog (Havcr1).